Consider the following 370-residue polypeptide: UDP-N-acetylglucosamine--N-acetylmuramyl-(pentapeptide) pyrophosphoryl-undecaprenol N-acetylglucosamine transferase (370 aa).

UDP-N-acetyl-alpha-D-glucosamine-binding positions include 20-22, asparagine 134, arginine 170, serine 204, isoleucine 257, and glutamine 301; that span reads TAG.

It belongs to the glycosyltransferase 28 family. MurG subfamily.

It is found in the cell membrane. The enzyme catalyses di-trans,octa-cis-undecaprenyl diphospho-N-acetyl-alpha-D-muramoyl-L-alanyl-D-glutamyl-meso-2,6-diaminopimeloyl-D-alanyl-D-alanine + UDP-N-acetyl-alpha-D-glucosamine = di-trans,octa-cis-undecaprenyl diphospho-[N-acetyl-alpha-D-glucosaminyl-(1-&gt;4)]-N-acetyl-alpha-D-muramoyl-L-alanyl-D-glutamyl-meso-2,6-diaminopimeloyl-D-alanyl-D-alanine + UDP + H(+). It functions in the pathway cell wall biogenesis; peptidoglycan biosynthesis. In terms of biological role, cell wall formation. Catalyzes the transfer of a GlcNAc subunit on undecaprenyl-pyrophosphoryl-MurNAc-pentapeptide (lipid intermediate I) to form undecaprenyl-pyrophosphoryl-MurNAc-(pentapeptide)GlcNAc (lipid intermediate II). The sequence is that of UDP-N-acetylglucosamine--N-acetylmuramyl-(pentapeptide) pyrophosphoryl-undecaprenol N-acetylglucosamine transferase from Corynebacterium jeikeium (strain K411).